The chain runs to 651 residues: Probable potassium transport system protein Kup 3 (651 aa).

A run of 12 helical transmembrane segments spans residues 38–58 (FWALTLGGIGVVFGDIGTSPL), 77–97 (VLVLGVLSLILWALLIVVTAK), 129–149 (LFLLVLGVIGASMFIGDSMIT), 166–186 (PALEHYVVPLTVLVLVLLFGV), 197–217 (FFGPVMLVWFATLAAMGAMHI), 242–262 (IGLVTLGAVFLAVTGGEALYA), 276–296 (WLGFVLPALLINYFGQGALVL), 314–334 (LVLPLTLMATAATVIASQAVI), 366–386 (IYLPRVNALLLIGVLLLVLLF), 396–416 (YGIAVSTTMVVDGIMGFVVIW), 421–441 (WSWPAAALVILPLVLVDAMFF), and 448–468 (LLDGAWVPLLFGLAMAVVIWT).

It belongs to the HAK/KUP transporter (TC 2.A.72) family.

Its subcellular location is the cell inner membrane. It carries out the reaction K(+)(in) + H(+)(in) = K(+)(out) + H(+)(out). Its function is as follows. Transport of potassium into the cell. Likely operates as a K(+):H(+) symporter. In Rhodopseudomonas palustris (strain ATCC BAA-98 / CGA009), this protein is Probable potassium transport system protein Kup 3.